Here is a 910-residue protein sequence, read N- to C-terminus: DNA mismatch repair protein MutS (910 aa).

658 to 665 (GPNMGGKS) serves as a coordination point for ATP.

This sequence belongs to the DNA mismatch repair MutS family.

Its function is as follows. This protein is involved in the repair of mismatches in DNA. It is possible that it carries out the mismatch recognition step. This protein has a weak ATPase activity. This Brucella anthropi (strain ATCC 49188 / DSM 6882 / CCUG 24695 / JCM 21032 / LMG 3331 / NBRC 15819 / NCTC 12168 / Alc 37) (Ochrobactrum anthropi) protein is DNA mismatch repair protein MutS.